The following is a 358-amino-acid chain: MRKIIHIDMDCYFAAVEMRDFPEFKGKPLAVGGRSDRRGVISTCNYEARKFGVRSAMSSHKALQLCPDLVLVPGRMDVYKSVSAQIRSVFARYTDIIEPLSLDEAYLDVTDSPHCKGSATLMAKAIREEIFELTGLTASAGIAPIKFLAKIASDLNKPNGQYLITPERIPAFVKDLPLIKIPGVGKVTAAKLEALGLLNCQDVQQYPKDKLIHAFGKFGVVLIDRAHGIDPRALSMDRLRKSVGVETTLAQDIYSLEQCHQILPGLIQELGSRCAKSAKQRQIHKQVVKLKFSDFKQTTIEHRSDELNINLFYELLSQALARSQGRGIRLLGVSVGLSDNQVNEHAPSFYGAQLDLGL.

Residues 4–185 (IIHIDMDCYF…LPLIKIPGVG (182 aa)) enclose the UmuC domain. Residues Asp8 and Asp103 each contribute to the Mg(2+) site. Glu104 is an active-site residue.

Belongs to the DNA polymerase type-Y family. Monomer. Mg(2+) is required as a cofactor.

It localises to the cytoplasm. It catalyses the reaction DNA(n) + a 2'-deoxyribonucleoside 5'-triphosphate = DNA(n+1) + diphosphate. Its function is as follows. Poorly processive, error-prone DNA polymerase involved in untargeted mutagenesis. Copies undamaged DNA at stalled replication forks, which arise in vivo from mismatched or misaligned primer ends. These misaligned primers can be extended by PolIV. Exhibits no 3'-5' exonuclease (proofreading) activity. May be involved in translesional synthesis, in conjunction with the beta clamp from PolIII. The chain is DNA polymerase IV from Shewanella denitrificans (strain OS217 / ATCC BAA-1090 / DSM 15013).